The following is an 87-amino-acid chain: Small ribosomal subunit protein bS20 (87 aa).

A disordered region spans residues 1–26; it reads MANIKSAKKRAVQSEKARKHNASRRS.

It belongs to the bacterial ribosomal protein bS20 family.

In terms of biological role, binds directly to 16S ribosomal RNA. This chain is Small ribosomal subunit protein bS20, found in Enterobacter sp. (strain 638).